Here is a 1204-residue protein sequence, read N- to C-terminus: Integrator complex subunit 2 (1204 aa).

A helical transmembrane segment spans residues 428–444 (FVSLSFCMLLAFSTLVS).

Belongs to the Integrator subunit 2 family. In terms of assembly, component of the Integrator complex, composed of core subunits INTS1, INTS2, INTS3, INTS4, INTS5, INTS6, INTS7, INTS8, INTS9/RC74, INTS10, INTS11/CPSF3L, INTS12, INTS13, INTS14 and INTS15. The core complex associates with protein phosphatase 2A subunits PPP2CA and PPP2R1A, to form the Integrator-PP2A (INTAC) complex.

It localises to the nucleus. It is found in the nucleus membrane. The protein resides in the cytoplasm. Component of the integrator complex, a multiprotein complex that terminates RNA polymerase II (Pol II) transcription in the promoter-proximal region of genes. The integrator complex provides a quality checkpoint during transcription elongation by driving premature transcription termination of transcripts that are unfavorably configured for transcriptional elongation: the complex terminates transcription by (1) catalyzing dephosphorylation of the C-terminal domain (CTD) of Pol II subunit POLR2A/RPB1 and SUPT5H/SPT5, (2) degrading the exiting nascent RNA transcript via endonuclease activity and (3) promoting the release of Pol II from bound DNA. The integrator complex is also involved in terminating the synthesis of non-coding Pol II transcripts, such as enhancer RNAs (eRNAs), small nuclear RNAs (snRNAs), telomerase RNAs and long non-coding RNAs (lncRNAs). Mediates recruitment of cytoplasmic dynein to the nuclear envelope, probably as component of the integrator complex. The protein is Integrator complex subunit 2 of Homo sapiens (Human).